Consider the following 95-residue polypeptide: Small ribosomal subunit protein uS19 (95 aa).

The protein belongs to the universal ribosomal protein uS19 family.

Functionally, protein S19 forms a complex with S13 that binds strongly to the 16S ribosomal RNA. This is Small ribosomal subunit protein uS19 from Lactobacillus gasseri (strain ATCC 33323 / DSM 20243 / BCRC 14619 / CIP 102991 / JCM 1131 / KCTC 3163 / NCIMB 11718 / NCTC 13722 / AM63).